A 227-amino-acid chain; its full sequence is Probable maleylacetoacetate isomerase 2 (227 aa).

Positions 14–97 (IQPILYSYWR…YLEETRPQRP (84 aa)) constitute a GST N-terminal domain. Residues 24 to 29 (SSCSWR), Gln55, Val69, 81 to 82 (ES), Gln121, and 125 to 127 (NLI) contribute to the glutathione site. In terms of domain architecture, GST C-terminal spans 102–222 (DVHKRAKVRE…HPSNQPDCPP (121 aa)).

It belongs to the GST superfamily. Zeta family. The cofactor is glutathione.

The protein localises to the cytoplasm. It catalyses the reaction 4-maleylacetoacetate = 4-fumarylacetoacetate. It carries out the reaction RX + glutathione = an S-substituted glutathione + a halide anion + H(+). It participates in amino-acid degradation; L-phenylalanine degradation; acetoacetate and fumarate from L-phenylalanine: step 5/6. Catalyzes the glutathione dependent oxygenation of dichloroacetic acid to glyoxylic acid in vitro. Has no glutathione thioltransferase activity with 4-hydroxynonenal (4-HNE), adrenochrome, phenethyl isothiocyanate (PEITC), 5-hydroperoxyeicosatetraenoic acid ((5S)-HpETE), prostaglandin A2 (PGA2) or 2-hydroxyethyldisulfide (HED). In Drosophila melanogaster (Fruit fly), this protein is Probable maleylacetoacetate isomerase 2 (GstZ2).